Here is a 579-residue protein sequence, read N- to C-terminus: Basic helix-loop-helix ARNT-like protein 2 (579 aa).

An interaction with PER2 region spans residues 1 to 198 (MEFPRKRRGR…SPREKPIDTK (198 aa)). The Nuclear localization signal signature appears at 4–9 (PRKRRG). Positions 40–61 (RTGVSAPSGIREAHSQMEKRRR) are disordered. One can recognise a bHLH domain in the interval 48-101 (GIREAHSQMEKRRRDKMNHLIQKLSSMIPPHIPTAHKLDKLSVLRRAVQYLRSL). Positions 50–59 (REAHSQMEKR) are enriched in basic and acidic residues. A Nuclear export signal 1 motif is present at residues 118–128 (IQDKELSHLIL). Residues 119–190 (QDKELSHLIL…KEQLSCDGSP (72 aa)) form the PAS 1 domain. Over residues 186–196 (CDGSPREKPID) the composition is skewed to basic and acidic residues. The segment at 186–213 (CDGSPREKPIDTKTSQVYSHPYTGRPRM) is disordered. Lysine 226 is covalently cross-linked (Glycyl lysine isopeptide (Lys-Gly) (interchain with G-Cter in SUMO2 and SUMO3)). Lysine 233 is covalently cross-linked (Glycyl lysine isopeptide (Lys-Gly) (interchain with G-Cter in SUMO2)). A PAS 2 domain is found at 296–366 (VPQKSGKINV…DKHKAVLQSK (71 aa)). Positions 331–339 (LGYLPQELL) match the Nuclear export signal 2 motif. Residues 371 to 414 (TDSYKFRVKDGAFVTLKSEWFSFTNPWTKELEYIVSVNTLVLGR) form the PAC domain. Residues 469–536 (RLHSSSPEDA…AHPHGPLPGD (68 aa)) form a disordered region.

Component of the circadian core oscillator, which includes the CRY proteins, CLOCK, or NPAS2, BMAL1 or BMAL2, CSNK1D and/or CSNK1E, TIMELESS and the PER proteins. Interacts directly with CLOCK to form the BMAL2-CLOCK transactivator. Can form heterodimers or homodimers which interact directly with CLOCK to form the transcription activator. Interacts with NPAS2 and HIF1A. Interacts with PER2. As to expression, expressed in the suprachiasmatic nucleus (SCN).

The protein localises to the nucleus. Its function is as follows. Transcriptional activator which forms a core component of the circadian clock. The circadian clock, an internal time-keeping system, regulates various physiological processes through the generation of approximately 24 hour circadian rhythms in gene expression, which are translated into rhythms in metabolism and behavior. It is derived from the Latin roots 'circa' (about) and 'diem' (day) and acts as an important regulator of a wide array of physiological functions including metabolism, sleep, body temperature, blood pressure, endocrine, immune, cardiovascular, and renal function. Consists of two major components: the central clock, residing in the suprachiasmatic nucleus (SCN) of the brain, and the peripheral clocks that are present in nearly every tissue and organ system. Both the central and peripheral clocks can be reset by environmental cues, also known as Zeitgebers (German for 'timegivers'). The predominant Zeitgeber for the central clock is light, which is sensed by retina and signals directly to the SCN. The central clock entrains the peripheral clocks through neuronal and hormonal signals, body temperature and feeding-related cues, aligning all clocks with the external light/dark cycle. Circadian rhythms allow an organism to achieve temporal homeostasis with its environment at the molecular level by regulating gene expression to create a peak of protein expression once every 24 hours to control when a particular physiological process is most active with respect to the solar day. Transcription and translation of core clock components (CLOCK, NPAS2, BMAL1, BMAL2, PER1, PER2, PER3, CRY1 and CRY2) plays a critical role in rhythm generation, whereas delays imposed by post-translational modifications (PTMs) are important for determining the period (tau) of the rhythms (tau refers to the period of a rhythm and is the length, in time, of one complete cycle). A diurnal rhythm is synchronized with the day/night cycle, while the ultradian and infradian rhythms have a period shorter and longer than 24 hours, respectively. Disruptions in the circadian rhythms contribute to the pathology of cardiovascular diseases, cancer, metabolic syndromes and aging. A transcription/translation feedback loop (TTFL) forms the core of the molecular circadian clock mechanism. Transcription factors, CLOCK or NPAS2 and BMAL1 or BMAL2, form the positive limb of the feedback loop, act in the form of a heterodimer and activate the transcription of core clock genes and clock-controlled genes (involved in key metabolic processes), harboring E-box elements (5'-CACGTG-3') within their promoters. The core clock genes: PER1/2/3 and CRY1/2 which are transcriptional repressors form the negative limb of the feedback loop and interact with the CLOCK|NPAS2-BMAL1|BMAL2 heterodimer inhibiting its activity and thereby negatively regulating their own expression. This heterodimer also activates nuclear receptors NR1D1/2 and RORA/B/G, which form a second feedback loop and which activate and repress BMAL1 transcription, respectively. The CLOCK-BMAL2 heterodimer activates the transcription of SERPINE1/PAI1 and BHLHE40/DEC1. The chain is Basic helix-loop-helix ARNT-like protein 2 (Bmal2) from Mus musculus (Mouse).